We begin with the raw amino-acid sequence, 260 residues long: MRIAIIGGSGVYDPGILTNIHEERVETPYGAAVLKVGTYHGEEIGFMPRHGDKHTVPPHKVNYRANIWALKMLKVERVLATAAVGSTNPEFRPGDFVIVNDFLDFTKTRTYTFFEGGETGVVHTDFTTPYCPELGQVLVETAARLGIKAHAGGVYACTEGPRFETPAEIRMIRQLGGDLVGMTNVPEVVLAHEVGLCYGLIAMVTNMAAGISSTPLSHEEVLEIMDQNGKNLRDLIMQAIPGIPRQRNCRCSLAAGKIEV.

Residues Ser-9 and 49–50 each bind phosphate; that span reads RH. Met-182 provides a ligand contact to substrate. Thr-183 contacts phosphate. Position 206-208 (206-208) interacts with substrate; sequence NMA.

It belongs to the PNP/MTAP phosphorylase family. MTAP subfamily. In terms of assembly, homohexamer. Dimer of a homotrimer.

The enzyme catalyses a purine D-ribonucleoside + phosphate = a purine nucleobase + alpha-D-ribose 1-phosphate. The protein operates within purine metabolism; purine nucleoside salvage. Functionally, purine nucleoside phosphorylase which is highly specific for 6-oxopurine nucleosides. Cleaves guanosine or inosine to respective bases and sugar-1-phosphate molecules. Involved in purine salvage. The sequence is that of Probable 6-oxopurine nucleoside phosphorylase from Moorella thermoacetica (strain ATCC 39073 / JCM 9320).